A 414-amino-acid chain; its full sequence is MSILQIGAGGVGWVVAHKAAQNNDVLGDITIASRSIAKCEKIIESIKGKNNLKDSSKKLEARQVNADDIESLVKLINEVKPDLVINAGPPWVNVAIMEACYQAKVSYLDTSVSVDLCSKGQQVPEAYDAQWAFRDKFKQAGITAILSAGFDPGVVSVFAAYAAKYLFDEIDTIDVLDINAGDHGKKFATNFDPETNLLEIQGDSIYWDAGEWKRVPCHTRMLEFDFPKCGKFKVYSMSHDELRSLKEFIPAKRIEFWMGFGDRYLNYFNMMRDIGLLSPEPLTLQDGTVVKPLQVLKAMLPDPTSLAPGYKGLTCIGTWVQGKKDGKARSVFIYNHADHEVAYHDVEHQAIAYTTGVPAITAALQFFRGEWAEPGVFNMEQLNPDPFLETMPSIGLGWDVMELEPGQPDIQVVK.

Belongs to the saccharopine dehydrogenase family. Carboxynorspermidine synthase subfamily.

The enzyme catalyses carboxynorspermidine + NADP(+) + H2O = L-aspartate 4-semialdehyde + propane-1,3-diamine + NADPH + H(+). It carries out the reaction carboxyspermidine + NADP(+) + H2O = L-aspartate 4-semialdehyde + putrescine + NADPH + H(+). Functionally, involved in norspermidine biosynthesis. Catalyzes the synthesis of carboxynorspermidine from L-aspartate 4-semialdehyde and 1,3-diaminopropane. Is also active with putrescine as a substrate. Essential for biofilm formation. The sequence is that of Carboxynorspermidine synthase from Vibrio cholerae serotype O1 (strain ATCC 39315 / El Tor Inaba N16961).